The chain runs to 33 residues: Glucagon-2 (33 aa).

The protein belongs to the glucagon family.

It is found in the secreted. Functionally, promotes hydrolysis of glycogen and lipids, and raises the blood sugar level. The sequence is that of Glucagon-2 (gcg2) from Oreochromis niloticus (Nile tilapia).